A 5541-amino-acid polypeptide reads, in one-letter code: Malpibaldin synthetase (5541 aa).

The segment covering 1–13 (MGDKRPDGIKSAE) has biased composition (basic and acidic residues). Positions 1-26 (MGDKRPDGIKSAESHGQPSAPFGAEN) are disordered. The tract at residues 137–378 (KEDDIARDES…IDIISPAEKT (242 aa)) is condensation 1. Residues 401 to 799 (FEEQVDKSPD…GRNDDQVKIR (399 aa)) are adenylation 1. Residues 901-975 (VPCGETEDAI…VLAQDLSKHQ (75 aa)) enclose the Carrier 1 domain. Ser-936 bears the O-(pantetheine 4'-phosphoryl)serine mark. Residues 1021–1469 (QDVYSLAPLQ…LPLDERTKLL (449 aa)) are dual epimerase/condensation (E/C) domain 1. The interval 1489–1899 (FEQQVKQSPI…GRNDDQIKIR (411 aa)) is adenylation 2. In terms of domain architecture, Carrier 2 spans 2001-2075 (SPQGRIECAL…SFAQAFKGQL (75 aa)). Ser-2036 carries the O-(pantetheine 4'-phosphoryl)serine modification. Positions 2095–2537 (ELSFSQQRLW…LGSTEEELLL (443 aa)) are condensation 2. Residues 2557-2956 (FEDQVERSPD…GRNDDQVKIR (400 aa)) form an adenylation 3 region. Positions 3058 to 3132 (EPQGEVEMKL…VLAASITRGC (75 aa)) constitute a Carrier 3 domain. Position 3093 is an O-(pantetheine 4'-phosphoryl)serine (Ser-3093). The segment at 3182–3616 (QDIYSLSPLQ…VIPAEEHDLL (435 aa)) is dual epimerase/condensation (E/C) domain 2. The interval 3637–4038 (FENQVRERPE…GRNDEQVKIR (402 aa)) is adenylation 4. The 75-residue stretch at 4140-4214 (APRGDIEISL…VLAASLNTHQ (75 aa)) folds into the Carrier 4 domain. Position 4175 is an O-(pantetheine 4'-phosphoryl)serine (Ser-4175). A dual epimerase/condensation (E/C) domain 3 region spans residues 4260–4695 (VQDVYSLSPL…VIPAEEHDLL (436 aa)). The tract at residues 4716 to 5117 (FENQVRERPE…GRNDEQVKIR (402 aa)) is adenylation 5. The 76-residue stretch at 5219–5294 (LPSGDVEIGL…ELAQKLVQGG (76 aa)) folds into the Carrier 5 domain. At Ser-5254 the chain carries O-(pantetheine 4'-phosphoryl)serine. The tract at residues 5315-5523 (PLFCIHSGLG…VECTHIEMDK (209 aa)) is thioesterase (TE) domain.

Belongs to the NRP synthetase family.

Its function is as follows. Nonribosomal peptide synthetase that catalyzes the biosynthesis of the hydrophobic cyclopentapeptides malpibaldins, natural products that show biosurfactant activities. Module 3 shows promiscuous adenylation (accepting either Trp, Phe or Tyr) leading to the parallel production of multiple products from one NRPS assembly line, including malpibaldin A corresponding to cyclo(-L-Leu-D-Leu-D-Phe-L-Leu-D-Val-), malpibaldin B corresponding to cyclo(-L-Leu-D-Leu-D-Tyr-L-Leu-D-Val-) and malpibaldin C corresponding to cyclo(-Leu-Leu-Trp-Leu-Val-). The sequence is that of Malpibaldin synthetase from Mortierella alpina (Oleaginous fungus).